Reading from the N-terminus, the 337-residue chain is Large ribosomal subunit protein uL3 (337 aa).

A disordered region spans residues 1–20 (MASIHRPKRGSLAFSPRKRA).

Belongs to the universal ribosomal protein uL3 family. Part of the 50S ribosomal subunit. Forms a cluster with proteins L14 and L24e.

Functionally, one of the primary rRNA binding proteins, it binds directly near the 3'-end of the 23S rRNA, where it nucleates assembly of the 50S subunit. The chain is Large ribosomal subunit protein uL3 from Methanosarcina acetivorans (strain ATCC 35395 / DSM 2834 / JCM 12185 / C2A).